Reading from the N-terminus, the 266-residue chain is Glutathione S-transferase AN1595 (266 aa).

Positions 43 to 123 constitute a GST N-terminal domain; it reads SFGKLYTYKR…HVTNEDSTTT (81 aa). Residues Lys-93, Glu-107, Cys-108, and Asn-143 each coordinate glutathione. Substrate is bound at residue Lys-93. The GST C-terminal domain maps to 128–259; that stretch reads SSLDFVQIIR…VEEGLPNAPP (132 aa).

The protein belongs to the GST superfamily.

Its pathway is secondary metabolite biosynthesis; terpenoid biosynthesis. In terms of biological role, glutathione S-transferase; part of the gene cluster that mediates the biosynthesis of the diterpene ent-pimara-8(14),15-diene (PD). Within the cluster, the HMG-CoA reductase AN1593 functions in the mevalonate pathway, which produces isoprenoid precursors. The geranylgeranyl pyrophosphate (GGPP) synthase AN1592 is needed in the formation of GGPP, the precursor for diterpenes. Lastly, the pimaradiene synthase pbcA performs the 2 cyclization steps that convert GGPP to ent-pimara-8(14),15-diene. The putative roles of the remaining cluster enzymes in ent-pimara-8(14),15-diene biosynthesis is unclear. The cytochrome P450 monooxygenase AN1598, the glutathione S-transferase AN1595, the oxidoreductases AN1596 and AN1597 probably function as decorative enzymes. It is possible that in biological conditions the compound is oxidized to ent-pimara-8(14),15-dien-19-oic acid, which is a bioactive diterpene compound predominant in many plant extracts. This Emericella nidulans (strain FGSC A4 / ATCC 38163 / CBS 112.46 / NRRL 194 / M139) (Aspergillus nidulans) protein is Glutathione S-transferase AN1595.